The chain runs to 88 residues: UPF0297 protein BPUM_2379 (88 aa).

Belongs to the UPF0297 family.

This chain is UPF0297 protein BPUM_2379, found in Bacillus pumilus (strain SAFR-032).